We begin with the raw amino-acid sequence, 739 residues long: tRNA 5-methylaminomethyl-2-thiouridine biosynthesis bifunctional protein MnmC (739 aa).

The tract at residues 1 to 282 (MDKVTPAKLS…KREMLTATKL (282 aa)) is tRNA (mnm(5)s(2)U34)-methyltransferase. An FAD-dependent cmnm(5)s(2)U34 oxidoreductase region spans residues 330 to 739 (IGAGVCGLMA…HRSSLKKPLS (410 aa)).

The protein in the N-terminal section; belongs to the methyltransferase superfamily. tRNA (mnm(5)s(2)U34)-methyltransferase family. This sequence in the C-terminal section; belongs to the DAO family. FAD serves as cofactor.

It is found in the cytoplasm. It catalyses the reaction 5-aminomethyl-2-thiouridine(34) in tRNA + S-adenosyl-L-methionine = 5-methylaminomethyl-2-thiouridine(34) in tRNA + S-adenosyl-L-homocysteine + H(+). Catalyzes the last two steps in the biosynthesis of 5-methylaminomethyl-2-thiouridine (mnm(5)s(2)U) at the wobble position (U34) in tRNA. Catalyzes the FAD-dependent demodification of cmnm(5)s(2)U34 to nm(5)s(2)U34, followed by the transfer of a methyl group from S-adenosyl-L-methionine to nm(5)s(2)U34, to form mnm(5)s(2)U34. The sequence is that of tRNA 5-methylaminomethyl-2-thiouridine biosynthesis bifunctional protein MnmC from Psychrobacter sp. (strain PRwf-1).